We begin with the raw amino-acid sequence, 152 residues long: Endoribonuclease YbeY (152 aa).

Positions 113, 117, and 123 each coordinate Zn(2+).

Belongs to the endoribonuclease YbeY family. Zn(2+) serves as cofactor.

It is found in the cytoplasm. Functionally, single strand-specific metallo-endoribonuclease involved in late-stage 70S ribosome quality control and in maturation of the 3' terminus of the 16S rRNA. This chain is Endoribonuclease YbeY, found in Wolbachia pipientis subsp. Culex pipiens (strain wPip).